The sequence spans 655 residues: Sphingomyelin phosphodiesterase 3 (655 aa).

Residues 1-10 lie on the Cytoplasmic side of the membrane; it reads MVLYTTPFPN. An intramembrane region (helical) is located at residues 11 to 31; sequence SCLSALHAVSWALIFPCYWLV. Topologically, residues 32–64 are cytoplasmic; it reads DRLLASFIPTTYEKRQRADDPCCLQLFCTVLFT. Residues C53, C54, and C59 are each lipidated (S-palmitoyl cysteine). The segment at residues 65–85 is an intramembrane region (helical); that stretch reads PVYLALLVAALPFAFLGFIFW. The Cytoplasmic segment spans residues 86-655; it reads SPLQSARRPY…LMVSAGEEEA (570 aa). S178 bears the Phosphoserine mark. The interval 209–318 is disordered; that stretch reads VEYKGDGGRH…SGGSGEPGAN (110 aa). 2 stretches are compositionally biased toward basic and acidic residues: residues 211–221 and 246–255; these read YKGDGGRHPSD and GGEEGGRPQE. S289 is subject to Phosphoserine. E362 is a binding site for Mg(2+). S-palmitoyl cysteine attachment occurs at residues C395 and C396. Residue H639 is the Proton acceptor of the active site.

The protein belongs to the neutral sphingomyelinase family. It depends on Mg(2+) as a cofactor. Post-translationally, palmitoylated, palmitoylation-deficient proteins are targeted for lysosomal degradation. In terms of tissue distribution, predominantly expressed in brain (at protein level).

It is found in the golgi apparatus membrane. It localises to the cell membrane. The enzyme catalyses a sphingomyelin + H2O = phosphocholine + an N-acylsphing-4-enine + H(+). It carries out the reaction N-(15Z-tetracosenoyl)sphing-4-enine-1-phosphocholine + H2O = N-(15Z-tetracosenoyl)-sphing-4-enine + phosphocholine + H(+). The catalysed reaction is N-(tetracosanoyl)-sphing-4-enine-1-phosphocholine + H2O = N-tetracosanoyl-sphing-4-enine + phosphocholine + H(+). It catalyses the reaction N-(hexadecanoyl)-sphing-4-enine-1-phosphocholine + H2O = N-hexadecanoylsphing-4-enine + phosphocholine + H(+). The enzyme catalyses an N-(acyl)-sphingosylphosphocholine + H2O = an N-acyl-sphingoid base + phosphocholine + H(+). It carries out the reaction 1-hexadecanoyl-sn-glycero-3-phosphocholine + H2O = 1-hexadecanoyl-sn-glycerol + phosphocholine + H(+). The catalysed reaction is 1-O-octadecyl-sn-glycero-3-phosphocholine + H2O = 1-O-octadecyl-sn-glycerol + phosphocholine + H(+). It catalyses the reaction a sphingosylphosphocholine + H2O = a sphingoid base + phosphocholine + H(+). The protein operates within lipid metabolism; sphingolipid metabolism. Its activity is regulated as follows. Inhibited by nSMase inhibitor GW4869. Binding of anionic phospholipids (APLs) such as phosphatidylserine (PS) and phosphatidic acid (PA) increases enzymatic activity. Functionally, catalyzes the hydrolysis of sphingomyelin to form ceramide and phosphocholine. Ceramide mediates numerous cellular functions, such as apoptosis and growth arrest, and is capable of regulating these 2 cellular events independently. Also hydrolyzes sphingosylphosphocholine. Regulates the cell cycle by acting as a growth suppressor in confluent cells. Probably acts as a regulator of postnatal development and participates in bone and dentin mineralization. Binds to anionic phospholipids (APLs) such as phosphatidylserine (PS) and phosphatidic acid (PA) that modulate enzymatic activity and subcellular location. May be involved in IL-1-beta-induced JNK activation in hepatocytes. May act as a mediator in transcriptional regulation of NOS2/iNOS via the NF-kappa-B activation under inflammatory conditions. The sequence is that of Sphingomyelin phosphodiesterase 3 from Mus musculus (Mouse).